The following is a 424-amino-acid chain: Serine--tRNA ligase (424 aa).

230 to 232 (TAE) serves as a coordination point for L-serine. ATP is bound at residue 261–263 (RAE). Glutamate 284 contacts L-serine. ATP is bound at residue 348 to 351 (EISS). Serine 384 is a binding site for L-serine.

It belongs to the class-II aminoacyl-tRNA synthetase family. Type-1 seryl-tRNA synthetase subfamily. Homodimer. The tRNA molecule binds across the dimer.

The protein resides in the cytoplasm. It carries out the reaction tRNA(Ser) + L-serine + ATP = L-seryl-tRNA(Ser) + AMP + diphosphate + H(+). The catalysed reaction is tRNA(Sec) + L-serine + ATP = L-seryl-tRNA(Sec) + AMP + diphosphate + H(+). Its pathway is aminoacyl-tRNA biosynthesis; selenocysteinyl-tRNA(Sec) biosynthesis; L-seryl-tRNA(Sec) from L-serine and tRNA(Sec): step 1/1. Its function is as follows. Catalyzes the attachment of serine to tRNA(Ser). Is also able to aminoacylate tRNA(Sec) with serine, to form the misacylated tRNA L-seryl-tRNA(Sec), which will be further converted into selenocysteinyl-tRNA(Sec). The chain is Serine--tRNA ligase from Desulforamulus reducens (strain ATCC BAA-1160 / DSM 100696 / MI-1) (Desulfotomaculum reducens).